The primary structure comprises 443 residues: Regulator of rDNA transcription protein 5 (443 aa).

The 84-residue stretch at 4 to 87 folds into the RRM 1 domain; sequence SRIYIANVSY…RVLRVRTHNP (84 aa). The interval 112–140 is disordered; that stretch reads EDTAASGERAPTDAQDHPDQPQEGHMSPD. A compositionally biased stretch (basic and acidic residues) spans 121–133; that stretch reads APTDAQDHPDQPQ. In terms of domain architecture, RRM 2 spans 183–268; the sequence is DTVYCAFLPK…TKISIKPAYI (86 aa). The interval 408–443 is disordered; the sequence is GMTKQSVGSNKKKNKKKKSARGKEVRKLSVSNTTTQ. The segment covering 417 to 427 has biased composition (basic residues); that stretch reads NKKKNKKKKSA.

This sequence belongs to the RRT5 family.

May be involved in the modulation of rDNA transcription. This Candida glabrata (strain ATCC 2001 / BCRC 20586 / JCM 3761 / NBRC 0622 / NRRL Y-65 / CBS 138) (Yeast) protein is Regulator of rDNA transcription protein 5 (RRT5).